A 100-amino-acid polypeptide reads, in one-letter code: Chorion class A protein M2774 (100 aa).

A left arm region spans residues Gly-1 to Gly-33. A central domain region spans residues Ser-34 to Ile-81. Positions Cys-82–Tyr-100 are right arm.

The protein belongs to the chorion protein family.

In terms of biological role, this protein is one of many from the eggshell of the silk moth. This chain is Chorion class A protein M2774, found in Bombyx mori (Silk moth).